We begin with the raw amino-acid sequence, 951 residues long: Zinc fingers and homeoboxes protein 3 (951 aa).

The tract at residues 1 to 66 (MASKRKSTTP…SSTDGSALAN (66 aa)) is disordered. The segment covering 42-58 (PSEAPEASSEAAPNPSS) has biased composition (low complexity). 2 consecutive C2H2-type zinc fingers follow at residues 77–100 (YSCK…TSEH) and 109–132 (FVCT…AKCH). The interval 198-249 (KENAPTQPGGEALPKPLAGETEGKEGDHTFINGATPVSQASANSTKPPHTAN) is disordered. Residues 232–244 (TPVSQASANSTKP) show a composition bias toward polar residues. The required for homodimerization and interaction with NFYA stretch occupies residues 237–481 (ASANSTKPPH…LLTACPSITS (245 aa)). The required for repressor activity stretch occupies residues 297–495 (LSSIPTYNAA…DANIYKNKKS (199 aa)). 2 consecutive DNA-binding regions (homeobox) follow at residues 298–357 (SSIP…GISW) and 487–546 (ANIY…RNLK). Positions 490 to 548 (YKNKKSHEQLSALKGSFCRNQFPGQSEVEHLTKVTGLSTREVRKWFSDRRYHCRNLKGT) are required for nuclear localization. Serine 597 carries the phosphoserine modification. The homeobox 3 DNA-binding region spans 605–664 (TPTKYKERAPEQLRVLESSFAQNPLPPEEELDRLRSETKMTRREIDGWFSERRKRVNAEE). Disordered regions lie at residues 621–642 (ESSF…RSET) and 661–702 (NAEE…NGSS). The span at 661–674 (NAEETKKADGHAPQ) shows a compositional bias: basic and acidic residues. A compositionally biased stretch (acidic residues) spans 675 to 690 (EEAEGAEEEGRDEELA). Phosphoserine occurs at positions 701 and 716. DNA-binding regions (homeobox) lie at residues 759 to 818 (PSRV…KNGQ) and 830 to 889 (FPPG…TRAV). The disordered stretch occupies residues 885 to 951 (ETRAVADTSS…PQSGRQLETD (67 aa)). 2 positions are modified to phosphoserine: serine 922 and serine 941. Residues 937-951 (FDTSSPQSGRQLETD) show a composition bias toward polar residues.

It belongs to the ZHX family. In terms of assembly, homodimer (via homeobox domain 1). Heterodimer with ZHX1 (via homeobox domain 1). Heterodimer with ZHX2 (via homeobox domain 1). Heterodimerization with ZHX1 is a prerequisite for repressor activity. Interacts with NFYA. As to expression, widely expressed.

The protein resides in the cytoplasm. The protein localises to the nucleus. Functionally, acts as a transcriptional repressor. Involved in the early stages of mesenchymal stem cell (MSC) osteogenic differentiation. Is a regulator of podocyte gene expression during primary glomerula disease. Binds to promoter DNA. This chain is Zinc fingers and homeoboxes protein 3 (Zhx3), found in Rattus norvegicus (Rat).